The primary structure comprises 99 residues: MNPANYLYLSVLLFTIGASGVLLRRNAIVMFMCVELMLNAVNLAFVTFARMHGHLDAQMIAFFTMVVAACEVVVGLAIIMTIFRTRKSASVDDANLLKG.

3 helical membrane passes run 3–23, 28–48, and 59–79; these read PANY…GVLL, IVMF…FVTF, and MIAF…LAII.

This sequence belongs to the complex I subunit 4L family. In terms of assembly, NDH-1 is composed of 14 different subunits. Subunits NuoA, H, J, K, L, M, N constitute the membrane sector of the complex.

It localises to the cell membrane. The catalysed reaction is a quinone + NADH + 5 H(+)(in) = a quinol + NAD(+) + 4 H(+)(out). Its function is as follows. NDH-1 shuttles electrons from NADH, via FMN and iron-sulfur (Fe-S) centers, to quinones in the respiratory chain. The immediate electron acceptor for the enzyme in this species is believed to be a menaquinone. Couples the redox reaction to proton translocation (for every two electrons transferred, four hydrogen ions are translocated across the cytoplasmic membrane), and thus conserves the redox energy in a proton gradient. The chain is NADH-quinone oxidoreductase subunit K from Mycobacterium bovis (strain ATCC BAA-935 / AF2122/97).